Consider the following 274-residue polypeptide: MDKQLIAERFAKARNTYTREALVQQQVAGKMIRILTDVLSSAEHLLPEEIAVRFRHIVEFGCGTGSYSRILLHTLHPETLLLNDLCREMEECVGELCSTQTAGRKKDGTEIRVSFLPGDAENFDFPKGTDLITSCSTLQWFNNPETFFLRCHHALTKDGILAFSTFGTKNMHQIRCLTGHGLYYLPIEELQALLSPYFNILHAEEEIVPLSFATPQAVLKHLKQTGVTGTEKRMWTRGRLQAFCEEYIRQFSSPPTGNVTLTYHPIYIIAKNKE.

The protein belongs to the methyltransferase superfamily.

The catalysed reaction is malonyl-[ACP] + S-adenosyl-L-methionine = malonyl-[ACP] methyl ester + S-adenosyl-L-homocysteine. Its pathway is cofactor biosynthesis; biotin biosynthesis. Converts the free carboxyl group of a malonyl-thioester to its methyl ester by transfer of a methyl group from S-adenosyl-L-methionine (SAM). It allows to synthesize pimeloyl-ACP via the fatty acid synthetic pathway. The chain is Malonyl-[acyl-carrier protein] O-methyltransferase from Bacteroides helcogenes (strain ATCC 35417 / DSM 20613 / JCM 6297 / CCUG 15421 / P 36-108).